The chain runs to 650 residues: Macrolide export ATP-binding/permease protein MacB (650 aa).

Residues 2-238 (IDIKGIRKSY…PTTAQEKRQE (237 aa)) form the ABC transporter domain. ATP is bound at residue 38 to 45 (GPSGSGKS). 4 helical membrane passes run 267–287 (GLSM…LALG), 531–551 (IAAI…LVSV), 580–600 (IVVS…FSLL), and 610–630 (VVSA…GIVF).

It belongs to the ABC transporter superfamily. Macrolide exporter (TC 3.A.1.122) family. Homodimer.

It localises to the cell inner membrane. Functionally, non-canonical ABC transporter that contains transmembrane domains (TMD), which form a pore in the inner membrane, and an ATP-binding domain (NBD), which is responsible for energy generation. Confers resistance against macrolides. This Bdellovibrio bacteriovorus (strain ATCC 15356 / DSM 50701 / NCIMB 9529 / HD100) protein is Macrolide export ATP-binding/permease protein MacB.